A 347-amino-acid chain; its full sequence is Nuclear distribution protein nudE-like 1 (347 aa).

Residues 28–190 (QSFQEARDEL…LAVRERQQEV (163 aa)) adopt a coiled-coil conformation. Positions 56-166 (VQAEQRNRDL…LDEKESLLVS (111 aa)) are self-association. Positions 64–189 (DLQADNQRLK…ELAVRERQQE (126 aa)) are interaction with KATNB1. The required for interaction with PAFAH1B1 stretch occupies residues 114 to 133 (YVRELEQANDDLERAKRATI). The segment at 175-347 (RDLRQELAVR…SAPGMLPLSV (173 aa)) is interaction with CENPF. The segment at 189–256 (EVTRKSAPSS…SARISALNIV (68 aa)) is interaction with YWHAE. The tract at residues 191 to 347 (TRKSAPSSPT…SAPGMLPLSV (157 aa)) is interaction with NEFL. Residues 195–256 (APSSPTLDCE…SARISALNIV (62 aa)) are interaction with KATNA1. Residue Ser215 is modified to Phosphoserine. Position 219 is a phosphothreonine; by CDK1 and MAPK1 (Thr219). Ser231 carries the post-translational modification Phosphoserine. An interaction with DISC1 region spans residues 241–280 (TSPLTPSARISALNIVGDLLRKVGALESKLAACRNFAKDQ). Ser242 is modified (phosphoserine; by CDK1). Phosphothreonine; by CDK1 and MAPK1 is present on Thr245. The interval 256–291 (VGDLLRKVGALESKLAACRNFAKDQASRKSYISGNV) is required for localization to the centrosome and interaction with dynein, dynactin, tubulin gamma, PCM1 and PCNT. Cys273 carries the S-palmitoyl cysteine; by ZDHHC2, ZDHHC3 and ZDHHC7 lipid modification. The interval 314–347 (KGAVNGFDPAPPPPDPGLGSSRPSSAPGMLPLSV) is disordered. Ser346 carries the phosphoserine modification.

This sequence belongs to the nudE family. In terms of assembly, self-associates. Interacts with DISC1, dynein, dynactin, tubulin gamma, KATNA1, KATNB1, microtubules, PAFAH1B1, PCM1, PCNT, and YWHAE. Interacts directly with NEFL and indirectly with NEFH. Interacts (via C-terminus) with CENPF. Interacts with ZNF365. Interacts with PLEKHM1 (via N- and C-terminus). Interacts with GTP-bound RAB9A; the interaction may lead to RAB9A-dynein motor tethering. Phosphorylated in mitosis. Can be phosphorylated by CDK1, CDK5 and MAPK1. Phosphorylation by CDK5 promotes interaction with KATNA1 and YWHAE. Post-translationally, palmitoylation at Cys-273 reduces affinity for dynein.

It localises to the cytoplasm. The protein resides in the cytoskeleton. It is found in the microtubule organizing center. Its subcellular location is the centrosome. The protein localises to the chromosome. It localises to the centromere. The protein resides in the kinetochore. It is found in the spindle. In terms of biological role, required for organization of the cellular microtubule array and microtubule anchoring at the centrosome. May regulate microtubule organization at least in part by targeting the microtubule severing protein KATNA1 to the centrosome. Also positively regulates the activity of the minus-end directed microtubule motor protein dynein. May enhance dynein-mediated microtubule sliding by targeting dynein to the microtubule plus ends. Required for several dynein- and microtubule-dependent processes such as the maintenance of Golgi integrity, the centripetal motion of secretory vesicles and the coupling of the nucleus and centrosome. Also required during brain development for the migration of newly formed neurons from the ventricular/subventricular zone toward the cortical plate. Required for mitosis in some cell types but appears to be dispensible for mitosis in cortical neuronal progenitors, which instead requires NDE1. Facilitates the polymerization of neurofilaments from the individual subunits NEFH and NEFL. Positively regulates lysosome peripheral distribution and ruffled border formation in osteoclasts. Plays a role, together with DISC1, in the regulation of neurite outgrowth. May act as a RAB9A/B effector that tethers RAB9-associated late endosomes to the dynein motor for their retrograde transport to the trans-Golgi network. This is Nuclear distribution protein nudE-like 1 (NDEL1) from Macaca fascicularis (Crab-eating macaque).